The sequence spans 163 residues: NADH-quinone oxidoreductase subunit I (163 aa).

2 consecutive 4Fe-4S ferredoxin-type domains span residues 54-84 (LRRYPNGEERCIACKLCEAVCPALAITIESD) and 94-123 (TRYDIDLTKCIFCGFCEEACPVDAIVETQI). [4Fe-4S] cluster contacts are provided by C64, C67, C70, C74, C103, C106, C109, and C113.

This sequence belongs to the complex I 23 kDa subunit family. As to quaternary structure, NDH-1 is composed of 14 different subunits. Subunits NuoA, H, J, K, L, M, N constitute the membrane sector of the complex. It depends on [4Fe-4S] cluster as a cofactor.

It localises to the cell inner membrane. The catalysed reaction is a quinone + NADH + 5 H(+)(in) = a quinol + NAD(+) + 4 H(+)(out). NDH-1 shuttles electrons from NADH, via FMN and iron-sulfur (Fe-S) centers, to quinones in the respiratory chain. The immediate electron acceptor for the enzyme in this species is believed to be ubiquinone. Couples the redox reaction to proton translocation (for every two electrons transferred, four hydrogen ions are translocated across the cytoplasmic membrane), and thus conserves the redox energy in a proton gradient. The polypeptide is NADH-quinone oxidoreductase subunit I (Cupriavidus necator (strain ATCC 17699 / DSM 428 / KCTC 22496 / NCIMB 10442 / H16 / Stanier 337) (Ralstonia eutropha)).